A 494-amino-acid chain; its full sequence is MRVLFASSEVFPLVKTGGLADVSGALPAALAAAGEDVRILLPGYPDAIKASGAKKAVGSLGDPFGLGAEATLLSGKLPGSGVPVWLVDCPALFERAGGPYQDPQGRDWPDNALRFALLSWTAAHLCTENSPVKWRPQVLHANDWQTGLAPAYLHAWSPAQRPATVFTIHNIAYQGQFPRDLVPRLGFPPEMYAMDGFEYYDTLSFLKSGLFYSDRITTVSPRYAKEIQTPAFGCGMEGLLAHRAADLTGILNGADYEVWNPAADTHLDHAFTPGDAAGKACNKAALQAELGLSQAPDAPLMVIVSRLNDHKGMDLVLAALPNILKMGAQVAVVGTGDRPLEDGFRAAAAAHPTQVAARIGYSEPLAHRMMAGGDMLLMPSRFEPCGLTQFYAFRYGTVPVAHATGGLADTLVDTGYDTLMTGKANGFVFEHSNVGAFQWAVERAVGLYAKKDQWTRIVKACNAQDFGWGRSAGLYRDLYKSLTGNGGGKGKKKA.

Position 15 (lysine 15) interacts with ADP-alpha-D-glucose.

The protein belongs to the glycosyltransferase 1 family. Bacterial/plant glycogen synthase subfamily.

The catalysed reaction is [(1-&gt;4)-alpha-D-glucosyl](n) + ADP-alpha-D-glucose = [(1-&gt;4)-alpha-D-glucosyl](n+1) + ADP + H(+). It participates in glycan biosynthesis; glycogen biosynthesis. Functionally, synthesizes alpha-1,4-glucan chains using ADP-glucose. This chain is Glycogen synthase, found in Paramagnetospirillum magneticum (strain ATCC 700264 / AMB-1) (Magnetospirillum magneticum).